Consider the following 346-residue polypeptide: N-acetyl-gamma-glutamyl-phosphate reductase (346 aa).

The active site involves C150.

It belongs to the NAGSA dehydrogenase family. Type 1 subfamily.

Its subcellular location is the cytoplasm. It catalyses the reaction N-acetyl-L-glutamate 5-semialdehyde + phosphate + NADP(+) = N-acetyl-L-glutamyl 5-phosphate + NADPH + H(+). It functions in the pathway amino-acid biosynthesis; L-arginine biosynthesis; N(2)-acetyl-L-ornithine from L-glutamate: step 3/4. Its function is as follows. Catalyzes the NADPH-dependent reduction of N-acetyl-5-glutamyl phosphate to yield N-acetyl-L-glutamate 5-semialdehyde. The sequence is that of N-acetyl-gamma-glutamyl-phosphate reductase from Moorella thermoacetica (strain ATCC 39073 / JCM 9320).